The sequence spans 297 residues: Ubiquinone biosynthesis protein COQ4, mitochondrial (297 aa).

The transit peptide at 1-54 directs the protein to the mitochondrion; sequence MLSSARARLPISLCSFSLPFARLPNTLSRYQETWQRLPGRTHPTRSIRTTPAYE. The Zn(2+) site is built by histidine 178, aspartate 179, histidine 182, and glutamate 194.

It belongs to the COQ4 family. In terms of assembly, component of a multi-subunit COQ enzyme complex, composed of at least COQ3, COQ4, COQ5, COQ6, COQ7 and COQ9. It depends on Zn(2+) as a cofactor.

It is found in the mitochondrion inner membrane. The catalysed reaction is a 4-hydroxy-3-methoxy-5-(all-trans-polyprenyl)benzoate + H(+) = a 2-methoxy-6-(all-trans-polyprenyl)phenol + CO2. Its pathway is cofactor biosynthesis; ubiquinone biosynthesis. Lyase that catalyzes the C1-decarboxylation of 4-hydroxy-3-methoxy-5-(all-trans-polyprenyl)benzoic acid into 2-methoxy-6-(all-trans-polyprenyl)phenol during ubiquinone biosynthesis. The sequence is that of Ubiquinone biosynthesis protein COQ4, mitochondrial from Laccaria bicolor (strain S238N-H82 / ATCC MYA-4686) (Bicoloured deceiver).